We begin with the raw amino-acid sequence, 4383 residues long: Replicase polyprotein 1a (4383 aa).

One can recognise a CoV Nsp1 globular domain in the interval 54–196 (PENHVMVDCR…PWVMYLRKRG (143 aa)). One can recognise a BetaCoV Nsp1 C-terminal domain in the interval 216–246 (FKVEDAYDQVHDEPKGKFSKKAYALIRGYRG). Positions 250–514 (LLYVDQYGCD…VKETNLICKA (265 aa)) constitute a CoV Nsp2 N-terminal domain. The Zn(2+) site is built by Cys-392, Cys-397, Cys-413, and Cys-416. Positions 392-416 (CEQDSCDFKGWIPGNMIDGFACTTC) are C4. Residues 524–713 (CGNLHQRELL…AQAFQSVAKV (190 aa)) form the CoV Nsp2 middle domain. Residues 733-851 (RRRICLSGRK…LDQAWRVPCA (119 aa)) form the CoV Nsp2 C-terminal domain. The region spanning 853–966 (RRVTFKEQPT…LYCAFTAPED (114 aa)) is the Ubiquitin-like 1 domain. The disordered stretch occupies residues 995 to 1025 (PCVASEQEESSEVLEDTLDDGPSVETSDSQV). Positions 1000-1013 (EQEESSEVLEDTLD) are enriched in acidic residues. The Peptidase C16 1 domain occupies 1036–1274 (DLESVIQDYE…IAQLYGSCIT (239 aa)). The active-site For PL1-PRO activity is the Cys-1074. The Zn(2+) site is built by Cys-1151, Cys-1154, Cys-1177, and Cys-1179. Residues 1151-1179 (CIKCDLALKLKGLDAMFFYGDVVSHICKC) form a C4-type 1 zinc finger. Residues His-1225 and Asp-1236 each act as for PL1-PRO activity in the active site. Positions 1275–1435 (PNVCFVKGDI…LISKCQITAV (161 aa)) constitute a Macro domain. The DPUP domain maps to 1491–1563 (DDARTFVQSN…VAQIKALFLD (73 aa)). Residues 1562–1617 (LDKVDILLTVDGVNFTNRFVPVGESFGKSLGNVFCDGVNVTKHKCDINYKGKVFFQ) enclose the Ubiquitin-like 2 domain. The 262-residue stretch at 1631–1892 (SSFNFDQKEL…KIEYKPDLSQ (262 aa)) folds into the Peptidase C16 2 domain. The active-site For PL2-PRO activity is Cys-1671. Zn(2+)-binding residues include Cys-1749, Cys-1751, Cys-1783, and Cys-1785. The C4-type 2 zinc finger occupies 1749–1785 (CKCGVKQEQRTGLDAVMHFGTLSREDLEIGYTVDCSC). Catalysis depends on for PL2-PRO activity residues His-1828 and Asp-1842. In terms of domain architecture, Nucleic acid-binding spans 1906-2007 (IKAQFKTFEK…TYFNRPLLVD (102 aa)). Positions 2020 to 2169 (DDSGDSSESG…ADNKVIYTTE (150 aa)) constitute a G2M domain. A run of 3 helical transmembrane segments spans residues 2138-2158 (TSACFNFIKWLFVLLFGWIKI), 2199-2219 (ACIIATIFLLWFNFIYANVIF), and 2221-2241 (DFYLPKIGFLPTFVGKIAQWI). An HD1 region spans residues 2138–2385 (TSACFNFIKW…ASFIKLFSLF (248 aa)). The region spanning 2235-2296 (GKIAQWIKNT…AIDVVQYEAD (62 aa)) is the 3Ecto domain. 2 cysteine pairs are disulfide-bonded: Cys-2251–Cys-2275 and Cys-2266–Cys-2272. Helical transmembrane passes span 2313 to 2333 (LIVSYALYTAWFYPLFALISI), 2343 to 2363 (LFMLSTLHWSFRLLVALANML), and 2365 to 2385 (AHVFMRFYIIIASFIKLFSLF). Positions 2383-2473 (SLFKHVAYGC…ELKRPIQPTD (91 aa)) are Y1. Positions 2383–2750 (SLFKHVAYGC…LTTPFSLKGG (368 aa)) constitute a CoV Nsp3 Y domain. Residues His-2387, Cys-2392, Cys-2397, Cys-2400, Cys-2433, His-2436, Cys-2440, and Cys-2443 each coordinate Zn(2+). The interval 2387 to 2400 (HVAYGCSKSGCLFC) is ZF1. The tract at residues 2433-2443 (CSKHQWNCIDC) is ZF2. Residues 2474-2566 (VAYHTVTDVK…MVDKNLITTA (93 aa)) form a Y2 region. The segment at 2474–2750 (VAYHTVTDVK…LTTPFSLKGG (277 aa)) is coV-Y. The segment at 2567–2649 (NTGTSVTETM…DSVMSAVSAG (83 aa)) is Y3. Residues 2650–2750 (LELTDESCNN…LTTPFSLKGG (101 aa)) are Y4. The next 7 helical transmembrane spans lie at 2752–2772 (VFSYFVYVCFVLSLVCFIGLW), 2824–2844 (STFGLSYYSNSMACPIVVAVI), 3009–3029 (VFDLIYQLFKGLAQPVDFLAL), 3031–3051 (ASSIAGAILAVIVVLVFYYLI), 3063–3083 (VVFVNVIVWCVNFMMLFVFQV), 3090–3110 (VYAICYFYATLYFPSEISVIM), and 3115–3135 (LVMYGTIMPLWFCLLYIAVVV). The tract at residues 2752–3135 (VFSYFVYVCF…FCLLYIAVVV (384 aa)) is HD2. Residues 3149–3246 (LGTSVRSDGT…TASVSTSFLQ (98 aa)) form the Nsp4C domain. Residues 3247 to 3549 (SGIVKMVNPT…YQQLAGIKLQ (303 aa)) form the Peptidase C30 domain. Active-site for 3CL-PRO activity residues include His-3287 and Cys-3391. Positions 3319 to 3775 (LSLTVMSYQM…IISCYWGLFS (457 aa)) are HD3. Transmembrane regions (helical) follow at residues 3558-3578 (GTVCWIMASTFLFSCIITAFV), 3588-3608 (TNMFSITFCALCVISLAMLLV), 3615-3635 (LTMYITPVLFTLLYNNYLVVY), 3657-3677 (TYTDEVIYGMLLLVGMVFVTL), 3684-3704 (LFSFIMFVGRLISVFSLWYKG), 3711-3731 (ILLMLASLFGTYTWTTVLSMA), and 3755-3775 (IVLLCYLFIGYIISCYWGLFS). One can recognise a RdRp Nsp7 cofactor domain in the interval 3837–3925 (SKLTDVKCAN…DYAKDNTVLQ (89 aa)). One can recognise a RdRp Nsp8 cofactor domain in the interval 3926–4122 (ALQSEFVNMA…YNEVSATVLQ (197 aa)). The 110-residue stretch at 4123–4232 (NNELMPAKLK…GTISSTVRLQ (110 aa)) folds into the Nsp9 ssRNA-binding domain. The ExoN/MTase coactivator domain occupies 4233–4370 (AGTATEYASN…CVSTDTTVQS (138 aa)). Positions 4306, 4309, 4315, 4322, 4348, 4351, 4359, and 4361 each coordinate Zn(2+). 2 zinc fingers span residues 4306 to 4322 (CIYCRARVEHPDVDGLC) and 4348 to 4361 (CRVCGFWRDGSCSC).

This sequence belongs to the coronaviruses polyprotein 1ab family. In terms of assembly, 3CL-PRO exists as monomer and homodimer. Eight copies of nsp7 and eight copies of nsp8 assemble to form a heterohexadecamer. Nsp9 is a dimer. Nsp10 forms a dodecamer. In terms of processing, specific enzymatic cleavages in vivo by its own proteases yield mature proteins. 3CL-PRO and PL-PRO proteinases are autocatalytically processed.

Its subcellular location is the host membrane. It is found in the host cytoplasm. The protein localises to the host perinuclear region. It carries out the reaction Thiol-dependent hydrolysis of ester, thioester, amide, peptide and isopeptide bonds formed by the C-terminal Gly of ubiquitin (a 76-residue protein attached to proteins as an intracellular targeting signal).. The catalysed reaction is TSAVLQ-|-SGFRK-NH2 and SGVTFQ-|-GKFKK the two peptides corresponding to the two self-cleavage sites of the SARS 3C-like proteinase are the two most reactive peptide substrates. The enzyme exhibits a strong preference for substrates containing Gln at P1 position and Leu at P2 position.. It catalyses the reaction a 5'-end diphospho-ribonucleoside in mRNA + GTP + H(+) = a 5'-end (5'-triphosphoguanosine)-ribonucleoside in mRNA + diphosphate. Functionally, the papain-like proteinase 1 (PL1-PRO) and papain-like proteinase 2 (PL2-PRO) are responsible for the cleavages located at the N-terminus of the replicase polyprotein. In addition, PLP2 possesses a deubiquitinating/deISGylating activity and processes both 'Lys-48'- and 'Lys-63'-linked polyubiquitin chains from cellular substrates. Antagonizes innate immune induction of type I interferon by blocking the phosphorylation, dimerization and subsequent nuclear translocation of host IRF-3. Its function is as follows. Responsible for the majority of cleavages as it cleaves the C-terminus of replicase polyprotein at 11 sites. Recognizes substrates containing the core sequence [ILMVF]-Q-|-[SGACN]. Inhibited by the substrate-analog Cbz-Val-Asn-Ser-Thr-Leu-Gln-CMK. Also contains an ADP-ribose-1''-phosphate (ADRP)-binding function. Nsp7-nsp8 hexadecamer may possibly confer processivity to the polymerase, maybe by binding to dsRNA or by producing primers utilized by the latter. In terms of biological role, catalytic subunit of viral RNA capping enzyme which catalyzes the RNA guanylyltransferase reaction for genomic and sub-genomic RNAs. The kinase-like NiRAN domain of NSP12 transfers RNA to the amino terminus of NSP9, forming a covalent RNA-protein intermediate. Subsequently, the NiRAN domain transfers RNA to GDP, forming the core cap structure GpppA-RNA. The NSP14 and NSP16 methyltransferases then add methyl groups to form functional cap structures. Functionally, binds to the 40S ribosomal subunit and inhibits host translation. The nsp1-40S ribosome complex further induces an endonucleolytic cleavage near the 5'UTR of host mRNAs, targeting them for degradation. This inhibits the integrated stress response (ISR) in the infected cell by preventing EIF2S1/eIF2-alpha phosphorylation upstream of stress granule formation and depletes host G3BP1. By suppressing host gene expression, nsp1 facilitates efficient viral gene expression in infected cells and evasion from host immune response. This Human coronavirus OC43 (HCoV-OC43) protein is Replicase polyprotein 1a.